Consider the following 462-residue polypeptide: Cysteine--tRNA ligase (462 aa).

Cys-30 contributes to the Zn(2+) binding site. Residues 32–42 (MTVYDYCHVGH) carry the 'HIGH' region motif. Cys-214, His-239, and Glu-243 together coordinate Zn(2+). Residues 271–275 (KMSKS) carry the 'KMSKS' region motif. Position 274 (Lys-274) interacts with ATP.

It belongs to the class-I aminoacyl-tRNA synthetase family. In terms of assembly, monomer. Zn(2+) serves as cofactor.

It is found in the cytoplasm. The catalysed reaction is tRNA(Cys) + L-cysteine + ATP = L-cysteinyl-tRNA(Cys) + AMP + diphosphate. This chain is Cysteine--tRNA ligase, found in Cupriavidus taiwanensis (strain DSM 17343 / BCRC 17206 / CCUG 44338 / CIP 107171 / LMG 19424 / R1) (Ralstonia taiwanensis (strain LMG 19424)).